A 116-amino-acid chain; its full sequence is Large ribosomal subunit protein uL18 (116 aa).

The protein belongs to the universal ribosomal protein uL18 family. As to quaternary structure, part of the 50S ribosomal subunit; part of the 5S rRNA/L5/L18/L25 subcomplex. Contacts the 5S and 23S rRNAs.

Functionally, this is one of the proteins that bind and probably mediate the attachment of the 5S RNA into the large ribosomal subunit, where it forms part of the central protuberance. This Psychrobacter arcticus (strain DSM 17307 / VKM B-2377 / 273-4) protein is Large ribosomal subunit protein uL18.